A 325-amino-acid chain; its full sequence is Large ribosomal subunit protein uL1m (325 aa).

Residues 1–50 constitute a mitochondrion transit peptide; sequence MAATVRCFGRVLIHHQRCSLATVTSQTSLYPCCIYVPVPNRHFAAAAKPA. The segment at 47 to 66 is disordered; the sequence is AKPAKKTKKGTKEKASNEKK. Residues 56-66 show a composition bias toward basic and acidic residues; the sequence is GTKEKASNEKK.

It belongs to the universal ribosomal protein uL1 family.

Its subcellular location is the mitochondrion. The chain is Large ribosomal subunit protein uL1m (MRPL1) from Bos taurus (Bovine).